Consider the following 107-residue polypeptide: Thiosulfate sulfurtransferase GlpE (107 aa).

One can recognise a Rhodanese domain in the interval 19-107 (QDLNAVLVDI…WHKAGLPVEK (89 aa)). Cysteine 67 serves as the catalytic Cysteine persulfide intermediate.

Belongs to the GlpE family.

It localises to the cytoplasm. It carries out the reaction thiosulfate + hydrogen cyanide = thiocyanate + sulfite + 2 H(+). The enzyme catalyses thiosulfate + [thioredoxin]-dithiol = [thioredoxin]-disulfide + hydrogen sulfide + sulfite + 2 H(+). In terms of biological role, transferase that catalyzes the transfer of sulfur from thiosulfate to thiophilic acceptors such as cyanide or dithiols. May function in a CysM-independent thiosulfate assimilation pathway by catalyzing the conversion of thiosulfate to sulfite, which can then be used for L-cysteine biosynthesis. The chain is Thiosulfate sulfurtransferase GlpE from Aliivibrio fischeri (strain ATCC 700601 / ES114) (Vibrio fischeri).